A 364-amino-acid polypeptide reads, in one-letter code: DNA polymerase IV (364 aa).

The UmuC domain maps to 7–187 (IIHVDMDAFY…LPVNRVPGVG (181 aa)). The Mg(2+) site is built by Asp11 and Asp105. Glu106 is an active-site residue.

This sequence belongs to the DNA polymerase type-Y family. Monomer. It depends on Mg(2+) as a cofactor.

It localises to the cytoplasm. It carries out the reaction DNA(n) + a 2'-deoxyribonucleoside 5'-triphosphate = DNA(n+1) + diphosphate. In terms of biological role, poorly processive, error-prone DNA polymerase involved in untargeted mutagenesis. Copies undamaged DNA at stalled replication forks, which arise in vivo from mismatched or misaligned primer ends. These misaligned primers can be extended by PolIV. Exhibits no 3'-5' exonuclease (proofreading) activity. May be involved in translesional synthesis, in conjunction with the beta clamp from PolIII. This chain is DNA polymerase IV, found in Stenotrophomonas maltophilia (strain K279a).